A 689-amino-acid chain; its full sequence is Glycine--tRNA ligase beta subunit (689 aa).

It belongs to the class-II aminoacyl-tRNA synthetase family. Tetramer of two alpha and two beta subunits.

Its subcellular location is the cytoplasm. It carries out the reaction tRNA(Gly) + glycine + ATP = glycyl-tRNA(Gly) + AMP + diphosphate. This Pasteurella multocida (strain Pm70) protein is Glycine--tRNA ligase beta subunit (glyS).